The primary structure comprises 433 residues: Arabinooligosaccharide-binding protein (433 aa).

A signal peptide spans 1–21 (MKKMTVCFLVLMMLLTLVIAG). The N-palmitoyl cysteine moiety is linked to residue Cys-22. Cys-22 carries the S-diacylglycerol cysteine lipid modification.

Belongs to the bacterial solute-binding protein 1 family. The complex is composed of two ATP-binding proteins (MsmX), two transmembrane proteins (AraP and AraQ) and a solute-binding protein (AraN).

It is found in the cell membrane. Part of the ABC transporter complex AraNPQ involved in the uptake of arabinooligosaccharides. Transports alpha-1,5-arabinooligosaccharides, at least up to four L-arabinosyl units. AraN captures the substrate and delivers it to the two transmembrane components. This Bacillus subtilis (strain 168) protein is Arabinooligosaccharide-binding protein.